Consider the following 369-residue polypeptide: Sesquiterpene cyclase hepA (369 aa).

Mg(2+) is bound by residues Asp-100, Asn-248, Ser-252, and Asp-256. The short motif at Asp-100 to Asp-104 is the DDXXD motif element. Residues Asn-255–Lys-262 carry the (N,D)D(L,I,V)X(S,T)XXXE motif motif.

Belongs to the terpene synthase family. Requires Mg(2+) as cofactor.

Its function is as follows. Sesquiterpene cyclase; part of the gene cluster that mediates the biosynthesis of heptelidic acid (HA), a sesquiterpene lactone that acts as an inhibitor of glyceraldehyde-3-phosphatedehydrogenase (GAPDH) and a growth inhibitor of the salt-tolerant lactic acid bacteria in soy sauce brewing. This is Sesquiterpene cyclase hepA from Aspergillus oryzae (strain ATCC 42149 / RIB 40) (Yellow koji mold).